A 326-amino-acid polypeptide reads, in one-letter code: F-box/LRR-repeat protein 12 (326 aa).

One can recognise an F-box domain in the interval 1-47; the sequence is MATLFDLPDLVLLEIFSYLPVRDRIRISRVCHRWKRLVDDRWLWRHV. LRR repeat units follow at residues 51–78, 86–111, 113–133, 161–185, 186–211, 212–236, 237–261, and 266–291; these read LYTM…RMGG, APQL…CLHV, DLSM…ELHS, VPAF…VLGG, TYRV…EVLG, CTLS…IRLT, VGGL…CFQG, and PDMP…EVQG.

In terms of assembly, interacts with SKP1 and CUL1.

The protein operates within protein modification; protein ubiquitination. Its function is as follows. Substrate-recognition component of the SCF (SKP1-CUL1-F-box protein)-type E3 ubiquitin ligase complex. Mediates the polyubiquitination and proteasomal degradation of CAMK1 leading to disruption of cyclin D1/CDK4 complex assembly which results in G1 cell cycle arrest in lung epithelia. The protein is F-box/LRR-repeat protein 12 (Fbxl12) of Mus musculus (Mouse).